The chain runs to 293 residues: Elongation factor Ts (293 aa).

Residues 79–82 form an involved in Mg(2+) ion dislocation from EF-Tu region; it reads TDFV.

Belongs to the EF-Ts family.

The protein localises to the cytoplasm. In terms of biological role, associates with the EF-Tu.GDP complex and induces the exchange of GDP to GTP. It remains bound to the aminoacyl-tRNA.EF-Tu.GTP complex up to the GTP hydrolysis stage on the ribosome. The sequence is that of Elongation factor Ts from Bacillus pumilus (strain SAFR-032).